A 486-amino-acid chain; its full sequence is NADH-quinone oxidoreductase subunit N (486 aa).

The next 14 helical transmembrane spans lie at 14 to 34 (SIAPMMVLSLFAVFILVLNFI), 45 to 65 (MLAILGLAINIFFLFGYSGIV), 77 to 97 (FAFISMIIILLFSILFLPLTL), 105 to 125 (CSLAEFYALYLFMIVGYEFMV), 130 to 150 (LIVILVGLETSSLALYTLIAL), 163 to 183 (YFTMGALSTGFFCFAIVIFYL), 203 to 223 (ILIATACIFLICSIGFKLSLI), 237 to 257 (SEVMAGYISIVPKIAGFIVAM), 268 to 288 (IAFIQISLYIIAVLTMTLANI), 299 to 319 (MLAFSSISHAGFVLCAVVIGT), 326 to 346 (LFLYWLMFSFANLGAFSVLWF), 377 to 397 (FLMALFMISLAGIPPFSVFWG), 409 to 429 (GFIFMAVIMAINSAIAVYYYL), and 459 to 479 (FIITFSAILCILAPFMVKFWT).

It belongs to the complex I subunit 2 family. In terms of assembly, NDH-1 is composed of 14 different subunits. Subunits NuoA, H, J, K, L, M, N constitute the membrane sector of the complex.

The protein resides in the cell inner membrane. The enzyme catalyses a quinone + NADH + 5 H(+)(in) = a quinol + NAD(+) + 4 H(+)(out). In terms of biological role, NDH-1 shuttles electrons from NADH, via FMN and iron-sulfur (Fe-S) centers, to quinones in the respiratory chain. The immediate electron acceptor for the enzyme in this species is believed to be ubiquinone. Couples the redox reaction to proton translocation (for every two electrons transferred, four hydrogen ions are translocated across the cytoplasmic membrane), and thus conserves the redox energy in a proton gradient. In Campylobacter hominis (strain ATCC BAA-381 / DSM 21671 / CCUG 45161 / LMG 19568 / NCTC 13146 / CH001A), this protein is NADH-quinone oxidoreductase subunit N.